A 938-amino-acid polypeptide reads, in one-letter code: MSDYKNTLNLPETGFPMRGDLAKREPGMLQRWYEQDLYGMIRTAKKGKKSFILHDGPPYANGSIHIGHSVNKILKDIIIKSKGMSGFDSPYIPGWDCHGLPIELKVEQLYGKPGEKLTAAEFRIKCREYAAEQVEGQKKDFIRLGVLGDWDRPYLTMDFKTEANIIRALGKIISNGHLLKGAKPVHWCTDCRSSLAEAEVEYYDKTSPSIDVAFHAVDAAAVATKFGVTRFNGPVSLVIWTTTPWTLPANRAISLHPEFAYQLVQVEGQCLILAAELVESVMKRAGITHWEVLGSCKGADLELMRFEHPFMGFDVPAIMGEHVTLDAGTGAVHTAGGHGPDDFVISQKYGLEIANPVGPNGCYLTGTHPLLDGKFVFKANDLIVDLLREKDALLHVEKLVHSYPCCWRHKTPIIFRATPQWFISMDQKGLRKQSLEEIKGVQWIPEWGQARIETMVANRPDWCISRQRTWGVPMSLFVHKDTEQLHPRSVELMEEVAKRVEQDGIQAWWDLDAADILGADAADYVKVPDTLDVWFDSGSTHSSVVDVRPEFNGHGADMYLEGSDQHRGWFMSSLMISTAMKGKAPYKEVLTHGFTVDGQGRKMSKSIGNTISPQDVMNKLGGDILRLWVASTDYTGEIAVSDEILKRSADSYRRIRNTARFLLANLNGFEPSTDCVAPEEMVVLDRWAVGRALAAQQDIEKAYANYDFHEVVQRLMQFCSVEMGSFYLDIIKDRQYTAKSDSVARRSCQTALFHIAEALVRWMAPIMSFTADEIWAFLPGKRAQYVFTEEWYDGLFGLAEGEGMNDSFWAELLKVRGEVNKVLEQARADKRLGGSLEAAVTLYADSELAERLNSLQDELRFVLLTSGARVAPLADAPADAQAAELVKGLKIAFSTAEGEKCPRCWHYTTDIGLVAEHADLCGRCVVNVAGDGEKRKFA.

Residues 58–68 (PYANGSIHIGH) carry the 'HIGH' region motif. L-isoleucyl-5'-AMP is bound at residue glutamate 561. Residues 602–606 (KMSKS) carry the 'KMSKS' region motif. Position 605 (lysine 605) interacts with ATP. Zn(2+) contacts are provided by cysteine 901, cysteine 904, cysteine 921, and cysteine 924.

The protein belongs to the class-I aminoacyl-tRNA synthetase family. IleS type 1 subfamily. In terms of assembly, monomer. Zn(2+) is required as a cofactor.

Its subcellular location is the cytoplasm. The catalysed reaction is tRNA(Ile) + L-isoleucine + ATP = L-isoleucyl-tRNA(Ile) + AMP + diphosphate. In terms of biological role, catalyzes the attachment of isoleucine to tRNA(Ile). As IleRS can inadvertently accommodate and process structurally similar amino acids such as valine, to avoid such errors it has two additional distinct tRNA(Ile)-dependent editing activities. One activity is designated as 'pretransfer' editing and involves the hydrolysis of activated Val-AMP. The other activity is designated 'posttransfer' editing and involves deacylation of mischarged Val-tRNA(Ile). The chain is Isoleucine--tRNA ligase from Serratia proteamaculans (strain 568).